We begin with the raw amino-acid sequence, 813 residues long: Palmitoyltransferase AKR1 (813 aa).

Positions 1 to 83 are disordered; sequence MAKKKSKSKS…PVTTSNETDP (83 aa). Topologically, residues 1–387 are cytoplasmic; sequence MAKKKSKSKS…KPWVSAKLGK (387 aa). Over residues 9-24 the composition is skewed to low complexity; sequence KSSSPKPKVSSTAAKP. Residues 28-46 are compositionally biased toward polar residues; it reads DNQQNIENVQDSPSALQQQ. A compositionally biased stretch (low complexity) spans 47–78; the sequence is SATAEESENTATTATPSEGTTATTESSPVTTS. 6 ANK repeats span residues 133–162, 167–196, 201–231, 235–264, 276–305, and 309–338; these read PTLA…VLVN, DEIT…NPNQ, LKAS…DPNL, QTYN…STDS, SNRT…DVSK, and SLFI…DIYF. The chain crosses the membrane as a helical span at residues 388-408; sequence IITFLTPYFLLPLSFNVLSMG. Topologically, residues 409–412 are lumenal; sequence GDQG. Residues 413-433 form a helical membrane-spanning segment; sequence GFIIPKLILAIGILGGGIYLL. The Cytoplasmic portion of the chain corresponds to 434–452; that stretch reads NKLIISQYIFDDKKLAKSP. The helical transmembrane segment at 453–473 threads the bilayer; the sequence is ILAGVFSATAFWSVLVWLYNI. The Lumenal segment spans residues 474 to 485; sequence LPTTFIHNFFAN. The chain crosses the membrane as a helical span at residues 486-506; sequence VIMAILIAIFTWSFFKAMFIN. Over 507–579 the chain is Cytoplasmic; sequence PGFVPTPADN…YNDIGVRNHK (73 aa). One can recognise a DHHC domain in the interval 536 to 586; that stretch reads HFCVNSFVRKPLRSRYSKHNKRLIARFDHSCPWVYNDIGVRNHKIFITFVY. Catalysis depends on Cys566, which acts as the S-palmitoyl cysteine intermediate. Residues 580–600 traverse the membrane as a helical segment; sequence IFITFVYSLNMAIFVFLYLSL. Over 601–642 the chain is Lumenal; the sequence is QYFDKVKDQYDSDDEGEGEGFVCSILGDDMCYGYKNHHFHFN. A helical transmembrane segment spans residues 643–663; sequence VFMWDLFQCVWVSFLCIVQTF. Residues 664–813 are Cytoplasmic-facing; it reads QILKGLTTWE…VDYYTLYSYH (150 aa).

This sequence belongs to the DHHC palmitoyltransferase family. AKR/ZDHHC17 subfamily.

It localises to the early endosome membrane. The protein resides in the golgi apparatus membrane. The enzyme catalyses L-cysteinyl-[protein] + hexadecanoyl-CoA = S-hexadecanoyl-L-cysteinyl-[protein] + CoA. Its function is as follows. Palmitoyltransferase specific for casein kinase 1. In Candida albicans (strain SC5314 / ATCC MYA-2876) (Yeast), this protein is Palmitoyltransferase AKR1 (AKR1).